An 803-amino-acid chain; its full sequence is Bifunctional enzyme MurC/Ddl (803 aa).

The UDP-N-acetylmuramate--alanine ligase stretch occupies residues 1 to 446 (MMKSLFYHFI…GEKLRDFEPQ (446 aa)). Residues 111-117 (GSHGKTT) and 600-655 (VEAF…CKEI) contribute to the ATP site. The segment at 447 to 803 (KLHLGIICGG…SFVDQAFAIQ (357 aa)) is D-alanine--D-alanine ligase. The ATP-grasp domain occupies 567–778 (KRFMSDLGIP…YEQIVHQLVI (212 aa)). Mg(2+) contacts are provided by Asp-732, Glu-745, and Asn-747.

This sequence in the N-terminal section; belongs to the MurCDEF family. It in the C-terminal section; belongs to the D-alanine--D-alanine ligase family. Requires Mg(2+) as cofactor. Mn(2+) is required as a cofactor.

It localises to the cytoplasm. It carries out the reaction UDP-N-acetyl-alpha-D-muramate + L-alanine + ATP = UDP-N-acetyl-alpha-D-muramoyl-L-alanine + ADP + phosphate + H(+). The enzyme catalyses 2 D-alanine + ATP = D-alanyl-D-alanine + ADP + phosphate + H(+). The protein operates within cell wall biogenesis; peptidoglycan biosynthesis. Cell wall formation. This chain is Bifunctional enzyme MurC/Ddl (murC/ddl), found in Chlamydia trachomatis serovar D (strain ATCC VR-885 / DSM 19411 / UW-3/Cx).